Here is a 61-residue protein sequence, read N- to C-terminus: Small ribosomal subunit protein uS14 (61 aa).

Zn(2+) is bound by residues C24, C27, C40, and C43.

Belongs to the universal ribosomal protein uS14 family. Zinc-binding uS14 subfamily. Part of the 30S ribosomal subunit. Contacts proteins S3 and S10. Zn(2+) is required as a cofactor.

Functionally, binds 16S rRNA, required for the assembly of 30S particles and may also be responsible for determining the conformation of the 16S rRNA at the A site. The protein is Small ribosomal subunit protein uS14 of Caldanaerobacter subterraneus subsp. tengcongensis (strain DSM 15242 / JCM 11007 / NBRC 100824 / MB4) (Thermoanaerobacter tengcongensis).